Reading from the N-terminus, the 593-residue chain is Probable metalloprotease ARX1 (593 aa).

This sequence belongs to the peptidase M24 family. As to quaternary structure, component of the nucleoplasmic and cytoplasmic pre-60S ribosomal particles. Interacts directly with REI1.

It localises to the cytoplasm. Its subcellular location is the nucleus. In terms of biological role, probable metalloprotease involved in proper assembly of pre-ribosomal particles during the biogenesis of the 60S ribosomal subunit. Accompanies the pre-60S particles to the cytoplasm. This chain is Probable metalloprotease ARX1 (ARX1), found in Saccharomyces cerevisiae (strain ATCC 204508 / S288c) (Baker's yeast).